Consider the following 126-residue polypeptide: Large ribosomal subunit protein eL8 (126 aa).

Belongs to the eukaryotic ribosomal protein eL8 family. In terms of assembly, part of the 50S ribosomal subunit. Probably part of the RNase P complex.

The protein resides in the cytoplasm. In terms of biological role, multifunctional RNA-binding protein that recognizes the K-turn motif in ribosomal RNA, the RNA component of RNase P, box H/ACA, box C/D and box C'/D' sRNAs. This is Large ribosomal subunit protein eL8 from Cenarchaeum symbiosum (strain A).